The primary structure comprises 164 residues: Kunitz-type trypsin inhibitor BrTI (164 aa).

This sequence belongs to the leguminous Kunitz-type inhibitor family.

Its function is as follows. Inhibitor of trypsin and human plasma kallikrein with a Ki of 2.9 nM and 14.0 nM, respectively. Does not inhibit chymotrypsin, porcine pancreatic elastas, human neutrophil elastase, coagulation factor Xa, human thrombin, porcine pancreatic kallikrein or plasmin. This is Kunitz-type trypsin inhibitor BrTI from Bauhinia rufa (Orchid tree).